Reading from the N-terminus, the 275-residue chain is tRNA pseudouridine synthase B (275 aa).

D38 serves as the catalytic Nucleophile.

The protein belongs to the pseudouridine synthase TruB family. Type 1 subfamily.

The enzyme catalyses uridine(55) in tRNA = pseudouridine(55) in tRNA. Responsible for synthesis of pseudouridine from uracil-55 in the psi GC loop of transfer RNAs. The polypeptide is tRNA pseudouridine synthase B (Nitratiruptor sp. (strain SB155-2)).